Here is a 241-residue protein sequence, read N- to C-terminus: Triosephosphate isomerase (241 aa).

Position 9-11 (9-11) interacts with substrate; sequence NWK. Residue histidine 96 is the Electrophile of the active site. The Proton acceptor role is filled by glutamate 165. Substrate is bound by residues glycine 171, serine 204, and 225–226; that span reads GG.

It belongs to the triosephosphate isomerase family. Homodimer.

The protein localises to the cytoplasm. It carries out the reaction D-glyceraldehyde 3-phosphate = dihydroxyacetone phosphate. It participates in carbohydrate biosynthesis; gluconeogenesis. Its pathway is carbohydrate degradation; glycolysis; D-glyceraldehyde 3-phosphate from glycerone phosphate: step 1/1. Functionally, involved in the gluconeogenesis. Catalyzes stereospecifically the conversion of dihydroxyacetone phosphate (DHAP) to D-glyceraldehyde-3-phosphate (G3P). This Prochlorococcus marinus (strain MIT 9312) protein is Triosephosphate isomerase.